Reading from the N-terminus, the 381-residue chain is Putative heat shock protein HSP 90-beta 2 (381 aa).

The ATP site is built by asparagine 46, aspartate 88, and lysine 107. Basic and acidic residues predominate over residues 145–174 (KEISDGKAEEEKGEKEEENKDDEEKPKIED). The tract at residues 145 to 192 (KEISDGKAEEEKGEKEEENKDDEEKPKIEDVGSDEEDDSGKDKKKKTK) is disordered. A Phosphoserine modification is found at serine 177. Residues 315–347 (ELPEDGEEKKRMEERKAKFENLCKFMKETLDKK) are a coiled coil.

The protein belongs to the heat shock protein 90 family. In terms of assembly, homodimer.

It localises to the cytoplasm. Its function is as follows. Putative molecular chaperone that may promote the maturation, structural maintenance and proper regulation of specific target proteins. This Homo sapiens (Human) protein is Putative heat shock protein HSP 90-beta 2 (HSP90AB2P).